Consider the following 860-residue polypeptide: Alpha,alpha-trehalose-phosphate synthase [UDP-forming] 6 (860 aa).

Ser5 is subject to Phosphoserine. The glycosyltransferase stretch occupies residues 53–557 (DRIIIVANEL…ARSFLQDLER (505 aa)).

This sequence in the N-terminal section; belongs to the glycosyltransferase 20 family. It in the C-terminal section; belongs to the trehalose phosphatase family. In terms of assembly, binds to the phosphopeptide-binding site of GRF/14-3-3. In terms of processing, phosphorylated. As to expression, expressed in seedlings, leaves, stems, flowers, siliques and roots.

It carries out the reaction D-glucose 6-phosphate + UDP-alpha-D-glucose = alpha,alpha-trehalose 6-phosphate + UDP + H(+). Its function is as follows. Regulates plant architecture, shape of epidermal pavement cells and branching of trichomes. The protein is Alpha,alpha-trehalose-phosphate synthase [UDP-forming] 6 of Arabidopsis thaliana (Mouse-ear cress).